The following is a 202-amino-acid chain: Small ribosomal subunit protein uS4c (202 aa).

An S4 RNA-binding domain is found at 90–152; it reads MRLDNLIFRL…AASKSLVNTY (63 aa).

It belongs to the universal ribosomal protein uS4 family. As to quaternary structure, part of the 30S ribosomal subunit. Contacts protein S5. The interaction surface between S4 and S5 is involved in control of translational fidelity.

Its subcellular location is the plastid. The protein localises to the chloroplast. Functionally, one of the primary rRNA binding proteins, it binds directly to 16S rRNA where it nucleates assembly of the body of the 30S subunit. Its function is as follows. With S5 and S12 plays an important role in translational accuracy. This is Small ribosomal subunit protein uS4c (rps4) from Emiliania huxleyi (Coccolithophore).